We begin with the raw amino-acid sequence, 133 residues long: ATP synthase epsilon chain (133 aa).

The protein belongs to the ATPase epsilon chain family. In terms of assembly, F-type ATPases have 2 components, CF(1) - the catalytic core - and CF(0) - the membrane proton channel. CF(1) has five subunits: alpha(3), beta(3), gamma(1), delta(1), epsilon(1). CF(0) has three main subunits: a, b and c.

It localises to the cell membrane. Its function is as follows. Produces ATP from ADP in the presence of a proton gradient across the membrane. This is ATP synthase epsilon chain from Lawsonia intracellularis (strain PHE/MN1-00).